Here is a 123-residue protein sequence, read N- to C-terminus: Small ribosomal subunit protein uS12 (123 aa).

A disordered region spans residues 1–26; it reads MPTLNQLVRKPRKRPVAKSKVPALDA. Asp-89 carries the 3-methylthioaspartic acid modification. The tract at residues 104–123 is disordered; that stretch reads TAGVKNRKQSRSKYGAKRPK. The segment covering 108–123 has biased composition (basic residues); that stretch reads KNRKQSRSKYGAKRPK.

Belongs to the universal ribosomal protein uS12 family. As to quaternary structure, part of the 30S ribosomal subunit. Contacts proteins S8 and S17. May interact with IF1 in the 30S initiation complex.

Functionally, with S4 and S5 plays an important role in translational accuracy. Interacts with and stabilizes bases of the 16S rRNA that are involved in tRNA selection in the A site and with the mRNA backbone. Located at the interface of the 30S and 50S subunits, it traverses the body of the 30S subunit contacting proteins on the other side and probably holding the rRNA structure together. The combined cluster of proteins S8, S12 and S17 appears to hold together the shoulder and platform of the 30S subunit. This Acidithiobacillus ferrooxidans (strain ATCC 23270 / DSM 14882 / CIP 104768 / NCIMB 8455) (Ferrobacillus ferrooxidans (strain ATCC 23270)) protein is Small ribosomal subunit protein uS12.